The primary structure comprises 250 residues: 5-oxoprolinase subunit A (250 aa).

It belongs to the LamB/PxpA family. In terms of assembly, forms a complex composed of PxpA, PxpB and PxpC.

The enzyme catalyses 5-oxo-L-proline + ATP + 2 H2O = L-glutamate + ADP + phosphate + H(+). Catalyzes the cleavage of 5-oxoproline to form L-glutamate coupled to the hydrolysis of ATP to ADP and inorganic phosphate. The protein is 5-oxoprolinase subunit A of Nocardia farcinica (strain IFM 10152).